We begin with the raw amino-acid sequence, 190 residues long: Elongation factor P (190 aa).

The protein belongs to the elongation factor P family.

It localises to the cytoplasm. It participates in protein biosynthesis; polypeptide chain elongation. Its function is as follows. Involved in peptide bond synthesis. Stimulates efficient translation and peptide-bond synthesis on native or reconstituted 70S ribosomes in vitro. Probably functions indirectly by altering the affinity of the ribosome for aminoacyl-tRNA, thus increasing their reactivity as acceptors for peptidyl transferase. This Amoebophilus asiaticus (strain 5a2) protein is Elongation factor P.